A 334-amino-acid chain; its full sequence is uncharacterized protein (334 aa).

This sequence belongs to the ADP-ribosylglycohydrolase family.

This is an uncharacterized protein from Escherichia coli (strain K12).